We begin with the raw amino-acid sequence, 420 residues long: Acetyl-CoA acetyltransferase B, mitochondrial (420 aa).

Residues 1–33 (MAFCGPRTAARLSHSTRALHYTHRSFASPRTLN) constitute a mitochondrion transit peptide. The active-site Acyl-thioester intermediate is Cys119. CoA-binding positions include Tyr212, 251–253 (RVD), and Lys256. Position 212 (Tyr212) interacts with K(+). K(+)-binding residues include Ala273 and Ala274. Ser277 provides a ligand contact to CoA. Val374 provides a ligand contact to K(+). Residue Cys406 is the Proton donor/acceptor of the active site.

The protein belongs to the thiolase-like superfamily. Thiolase family. Homotetramer.

It localises to the mitochondrion. It carries out the reaction 2 acetyl-CoA = acetoacetyl-CoA + CoA. The catalysed reaction is propanoyl-CoA + acetyl-CoA = 2-methyl-3-oxobutanoyl-CoA + CoA. Its pathway is lipid metabolism; fatty acid beta-oxidation. Functionally, this is one of the enzymes that catalyzes the last step of the mitochondrial beta-oxidation pathway, an aerobic process breaking down fatty acids into acetyl-CoA. Using free coenzyme A/CoA, catalyzes the thiolytic cleavage of medium- to long-chain 3-oxoacyl-CoAs into acetyl-CoA and a fatty acyl-CoA shortened by two carbon atoms. The activity of the enzyme is reversible and it can also catalyze the condensation of two acetyl-CoA molecules into acetoacetyl-CoA. Thereby, it plays a major role in ketone body metabolism. The chain is Acetyl-CoA acetyltransferase B, mitochondrial (acat1-b) from Xenopus laevis (African clawed frog).